Here is a 626-residue protein sequence, read N- to C-terminus: MLKQFLLLQSFSFFLFNVVIVGGRTFGGGFSAEENPFTPKASLVRYWNKEIRGQSPRSEFLISKASPLNAVDSATFSKLAAANSLPTRFPDFCSAANLFCFPDLGASLEKHDDDVKFSVYDQKNFTNYGNARAGGADSFKNYSKDGNVVTDSFRRYSRNAAGHDDKFTVYGENSNVVEEGFNSYGTFGTGGAGDFTNYQNNVNNPTSRFTAYSDGGNGRSQTFKTYTHEANAGNGQSFTSYGKNGNGVPNEFTSYGVSSNVIGSGFSNYGESGNAANDTFTSYGSDGNVPQNNFNNYGASGNAAVDTFANYRDKANVGDDSFSSYAKDSNSEKVNFVNYGQSFNPGSETFTGYGKGAEGSKLSFKTYTPNSTFKDYAKKGVAFAKYNVSTTTANTVGDGKTVNKWIEPGKFFRESSLKEGTVIPMPDIKDKMPKRSFLPRSIITKLPFSTSKLGEIKRIFHAVENSTMGGIITDAVTECERPPSVGETKRCVGSAEDMIDFATSVLGRSVVLRTTENVAGSKEKVVIGKVNGINGGKLTKAVSCHQSLYPYLLYYCHSVPKVRVYEADLLELNSKKKINHGIAICHMDTSSWGPSHGAFLALGSKPGRIEVCHWIFENDMNWAIAD.

Positions 1 to 23 (MLKQFLLLQSFSFFLFNVVIVGG) are cleaved as a signal peptide. The FXXY 1 repeat unit spans residues 117 to 120 (FSVY). Residue asparagine 124 is glycosylated (N-linked (GlcNAc...) asparagine). 11 FXXY repeats span residues 125–128 (FTNY), 139–142 (FKNY), 153–156 (FRRY), 167–170 (FTVY), 181–184 (FNSY), 195–198 (FTNY), 209–212 (FTAY), 223–226 (FKTY), 238–241 (FTSY), 252–255 (FTSY), and 266–269 (FSNY). A glycan (N-linked (GlcNAc...) asparagine) is linked at asparagine 141. Asparagine 277 carries N-linked (GlcNAc...) asparagine glycosylation. 7 FXXY repeats span residues 280-283 (FTSY), 294-297 (FNNY), 308-311 (FANY), 322-325 (FSSY), 336-339 (FVNY), 350-353 (FTGY), and 364-367 (FKTY). N-linked (GlcNAc...) asparagine glycosylation occurs at asparagine 370. 2 FXXY repeats span residues 373–376 (FKDY) and 383–386 (FAKY). N-linked (GlcNAc...) asparagine glycans are attached at residues asparagine 387 and asparagine 465. A BURP domain is found at 411-625 (FFRESSLKEG…FENDMNWAIA (215 aa)).

In terms of tissue distribution, expressed in flowers and stems. Detected in trichomes, guard cells, root vascular tissue, root hairs, pollen sacs, sepals and styles of pistils.

It localises to the secreted. Its subcellular location is the extracellular space. The protein resides in the apoplast. The protein localises to the cell wall. Its function is as follows. Involved in cell size determination. May serve as a chaperone for expansins through the secretory pathway. The sequence is that of Polygalacturonase 1 beta-like protein 3 from Arabidopsis thaliana (Mouse-ear cress).